A 137-amino-acid polypeptide reads, in one-letter code: Proofreading thioesterase EntH (137 aa).

The active-site Nucleophile or proton acceptor is glutamate 63.

It belongs to the thioesterase PaaI family. Homotetramer. Dimer of dimers. Interacts specifically with the aryl carrier protein (ArCP) domain of EntB.

The protein resides in the cytoplasm. It functions in the pathway siderophore biosynthesis; enterobactin biosynthesis. Required for optimal enterobactin synthesis. Acts as a proofreading enzyme that prevents EntB misacylation by hydrolyzing the thioester bound existing between EntB and wrongly charged molecules. The chain is Proofreading thioesterase EntH from Salmonella typhimurium (strain LT2 / SGSC1412 / ATCC 700720).